The sequence spans 432 residues: MGKSVAILGAQWGDEGKGKIVDLLTDRVKYVVRYQGGHNAGHTLIINGEKTVLRLIPSGILRDNVTCLIGNGVVLSPEALMKEMGELEARGINVRDRLKISEACPLILPYHVAMDHAREAALGKNKIGTTGRGIGPAYEDKVARRGLRVSDLFDKEAFAEKLKDILDYYNFQLVHYYKVEPVDFQKTLDDVFAIADVIKGMVADVTTLLHQARKDGVNILFEGAQGTMLDIDHGTYPFVTSSNTTAGGVATGSGFGPRNLDYVLGIIKAYCTRVGSGPFTTELFDEVGAEIARKGNEFGAVTGRPRRCGWFDAVAVRRAVQINSISGFCMTKLDVLDGFEELKICTAYKMPNGEIVEYAPMAAKDWKGVEPIYETMPGWSENTFRVTKREELPQAALDYIKRIEELVGVPVDILSTGPDRVETMILRDPFAA.

GTP is bound by residues 13–19 and 41–43; these read GDEGKGK and GHT. The active-site Proton acceptor is the Asp14. Mg(2+)-binding residues include Asp14 and Gly41. Residues 14–17, 39–42, Thr130, Arg144, Gln225, Thr240, and Arg304 contribute to the IMP site; these read DEGK and NAGH. The active-site Proton donor is His42. Position 300–306 (300–306) interacts with substrate; it reads AVTGRPR. Residues Arg306, 332–334, and 415–417 each bind GTP; these read KLD and STG.

This sequence belongs to the adenylosuccinate synthetase family. Homodimer. Mg(2+) is required as a cofactor.

It localises to the cytoplasm. It catalyses the reaction IMP + L-aspartate + GTP = N(6)-(1,2-dicarboxyethyl)-AMP + GDP + phosphate + 2 H(+). It functions in the pathway purine metabolism; AMP biosynthesis via de novo pathway; AMP from IMP: step 1/2. Functionally, plays an important role in the de novo pathway of purine nucleotide biosynthesis. Catalyzes the first committed step in the biosynthesis of AMP from IMP. This is Adenylosuccinate synthetase from Actinobacillus pleuropneumoniae serotype 7 (strain AP76).